A 133-amino-acid polypeptide reads, in one-letter code: ATP synthase epsilon chain (133 aa).

This sequence belongs to the ATPase epsilon chain family. In terms of assembly, F-type ATPases have 2 components, CF(1) - the catalytic core - and CF(0) - the membrane proton channel. CF(1) has five subunits: alpha(3), beta(3), gamma(1), delta(1), epsilon(1). CF(0) has three main subunits: a, b and c.

The protein localises to the cell membrane. Functionally, produces ATP from ADP in the presence of a proton gradient across the membrane. The sequence is that of ATP synthase epsilon chain from Bacillus cereus (strain ATCC 14579 / DSM 31 / CCUG 7414 / JCM 2152 / NBRC 15305 / NCIMB 9373 / NCTC 2599 / NRRL B-3711).